The sequence spans 202 residues: MSTLLGWLGRLWFGSLGTARPDPSTAVAAAGSTDVTSTQDAWAVLSLVNEWVKHSEAKLGVVLAFVGVMAAGLITIAADIPCPSLVILCIEGAAAVLILASAVLASLGLLPRFKGQSEEAQMNPLFYGDVANHFKGKSEEYVTALSGVIGSQDALIRQIARQVHANADVASRKYLWANRSILVGMLGLVCLFVLAAGVALGW.

Helical transmembrane passes span 60–80 (GVVL…AADI), 85–105 (LVIL…AVLA), and 181–201 (ILVG…VALG).

It localises to the cell membrane. Pycsar (pyrimidine cyclase system for antiphage resistance) provides immunity against bacteriophage. The pyrimidine cyclase (PycC) synthesizes cyclic nucleotides in response to infection; these serve as specific second messenger signals. The signals activate the adjacent effector, leading to bacterial cell death and abortive phage infection. A clade D Pycsar system. Functionally, the effector gene of a two-gene Pycsar system. Expression of this and adjacent uridylate cyclase PtPycC (AC A0A4V2JTK3) probably confers resistance to bacteriophage. The genes are probably only expressed in response to bacteriophage infection. Probably only responds to cUMP (produced by its cognate NTP cyclase), acts by impairing membrane integrity. This is Pycsar effector protein PtPycTM from Propioniciclava tarda.